A 161-amino-acid chain; its full sequence is Phosphopantetheine adenylyltransferase (161 aa).

Thr11 serves as a coordination point for substrate. ATP-binding positions include 11 to 12 (TF) and His19. Residues Lys43, Thr75, and Arg89 each coordinate substrate. ATP contacts are provided by residues 90-92 (GLR), Glu100, and 125-131 (YSFLSSS).

The protein belongs to the bacterial CoaD family. Homohexamer. Requires Mg(2+) as cofactor.

It is found in the cytoplasm. It carries out the reaction (R)-4'-phosphopantetheine + ATP + H(+) = 3'-dephospho-CoA + diphosphate. It functions in the pathway cofactor biosynthesis; coenzyme A biosynthesis; CoA from (R)-pantothenate: step 4/5. Its function is as follows. Reversibly transfers an adenylyl group from ATP to 4'-phosphopantetheine, yielding dephospho-CoA (dPCoA) and pyrophosphate. This chain is Phosphopantetheine adenylyltransferase, found in Listeria welshimeri serovar 6b (strain ATCC 35897 / DSM 20650 / CCUG 15529 / CIP 8149 / NCTC 11857 / SLCC 5334 / V8).